A 659-amino-acid polypeptide reads, in one-letter code: Exoribonuclease 2 (659 aa).

Positions 189–532 constitute an RNB domain; sequence RRDLTALHFV…NHRLIKACLA (344 aa). The S1 motif domain occupies 577-659; that stretch reads NPEFRAEVQD…ETRSLIGNLV (83 aa).

It belongs to the RNR ribonuclease family. RNase II subfamily.

It is found in the cytoplasm. It carries out the reaction Exonucleolytic cleavage in the 3'- to 5'-direction to yield nucleoside 5'-phosphates.. In terms of biological role, involved in mRNA degradation. Hydrolyzes single-stranded polyribonucleotides processively in the 3' to 5' direction. The protein is Exoribonuclease 2 of Mannheimia succiniciproducens (strain KCTC 0769BP / MBEL55E).